The sequence spans 276 residues: Large ribosomal subunit protein uL2c (276 aa).

The interval 225-276 (AMNPVDHPHGGGEGRTPIGRKKPVTPWGYSALGKKSRKRNRYSDASILRRRE) is disordered.

It belongs to the universal ribosomal protein uL2 family. Part of the 50S ribosomal subunit.

Its subcellular location is the plastid. The protein localises to the chloroplast. The chain is Large ribosomal subunit protein uL2c (rpl2) from Pinus thunbergii (Japanese black pine).